Here is a 440-residue protein sequence, read N- to C-terminus: Ribosomal protein uS12 methylthiotransferase RimO (440 aa).

An MTTase N-terminal domain is found at 6–116 (PKVGFVSLGC…VVSAVHEVVP (111 aa)). [4Fe-4S] cluster contacts are provided by Cys15, Cys51, Cys80, Cys149, Cys153, and Cys156. The 240-residue stretch at 135 to 374 (LTPRHYAYLK…AHQQAISSAR (240 aa)) folds into the Radical SAM core domain. Positions 376-440 (QAKIGLEMDV…DEYDMWGELV (65 aa)) constitute a TRAM domain.

It belongs to the methylthiotransferase family. RimO subfamily. The cofactor is [4Fe-4S] cluster.

The protein resides in the cytoplasm. It carries out the reaction L-aspartate(89)-[ribosomal protein uS12]-hydrogen + (sulfur carrier)-SH + AH2 + 2 S-adenosyl-L-methionine = 3-methylsulfanyl-L-aspartate(89)-[ribosomal protein uS12]-hydrogen + (sulfur carrier)-H + 5'-deoxyadenosine + L-methionine + A + S-adenosyl-L-homocysteine + 2 H(+). Its function is as follows. Catalyzes the methylthiolation of an aspartic acid residue of ribosomal protein uS12. The chain is Ribosomal protein uS12 methylthiotransferase RimO from Ectopseudomonas mendocina (strain ymp) (Pseudomonas mendocina).